A 224-amino-acid chain; its full sequence is uncharacterized protein (224 aa).

The active site involves aspartate 52.

The protein belongs to the pseudouridine synthase RluA family.

The catalysed reaction is a uridine in RNA = a pseudouridine in RNA. This is an uncharacterized protein from Haemophilus influenzae (strain ATCC 51907 / DSM 11121 / KW20 / Rd).